The following is a 764-amino-acid chain: Phenylalanine--tRNA ligase beta subunit (764 aa).

A tRNA-binding domain is found at 38–148 (CIAPKNVVVG…GELVLGKELN (111 aa)). Residues 375–455 (LKDRTLTFQL…RFVGIDNLVS (81 aa)) form the B5 domain. Residues Asp433, Asp439, Glu442, and Glu443 each contribute to the Mg(2+) site. An FDX-ACB domain is found at 673–763 (SIYPSSVRDL…LEKEFNARLK (91 aa)).

It belongs to the phenylalanyl-tRNA synthetase beta subunit family. Type 1 subfamily. As to quaternary structure, tetramer of two alpha and two beta subunits. Mg(2+) is required as a cofactor.

Its subcellular location is the cytoplasm. It carries out the reaction tRNA(Phe) + L-phenylalanine + ATP = L-phenylalanyl-tRNA(Phe) + AMP + diphosphate + H(+). This is Phenylalanine--tRNA ligase beta subunit (pheT) from Helicobacter pylori (strain ATCC 700392 / 26695) (Campylobacter pylori).